Reading from the N-terminus, the 344-residue chain is Phenylalanine--tRNA ligase alpha subunit (344 aa).

Glutamate 261 serves as a coordination point for Mg(2+).

This sequence belongs to the class-II aminoacyl-tRNA synthetase family. Phe-tRNA synthetase alpha subunit type 1 subfamily. In terms of assembly, tetramer of two alpha and two beta subunits. Mg(2+) serves as cofactor.

The protein localises to the cytoplasm. It carries out the reaction tRNA(Phe) + L-phenylalanine + ATP = L-phenylalanyl-tRNA(Phe) + AMP + diphosphate + H(+). This Ehrlichia ruminantium (strain Gardel) protein is Phenylalanine--tRNA ligase alpha subunit.